Reading from the N-terminus, the 276-residue chain is MTASGGGSTAATGRMPTWKERENNKKRERRRRAIAAKIFTGLRSQGNYKLPKHCDNNEVLKALCLEAGWIVHEDGTTYRKGSRPTETTVPCSSIQLSPQSSAFQSPIPSYQASPSSSSYPSPTRFDPNQSSTYLIPYLQNLASSGNLAPLRISNSAPVTPPISSPRRSNPRLPRWQSSNFPVSAPSSPTRRLHHYTSIPECDESDVSTVDSCRWGNFQSVNVSQTCPPSPTFNLVGKSVSSVGVDVSVKPWEGEKIHDVGIDDLELTLGHNTKGRG.

3 disordered regions span residues 1–30 (MTAS…RERR), 76–125 (TTYR…PTRF), and 155–191 (SAPV…PTRR). Residues 14 to 87 (RMPTWKEREN…YRKGSRPTET (74 aa)) form a required for DNA-binding region. Polar residues predominate over residues 84–103 (PTETTVPCSSIQLSPQSSAF). Positions 104–122 (QSPIPSYQASPSSSSYPSP) are enriched in low complexity. Thr-159 carries the phosphothreonine modification. Residues 164–174 (SPRRSNPRLPR) show a composition bias toward low complexity. Positions 175-189 (WQSSNFPVSAPSSPT) are enriched in polar residues.

The protein belongs to the BZR/LAT61 family. In terms of processing, phosphorylated. Phosphorylation increases protein degradation.

The sequence is that of BES1/BZR1 homolog protein 1 (BEH1) from Arabidopsis thaliana (Mouse-ear cress).